The primary structure comprises 291 residues: MPITNASPENILRYLHAAGTGTKEAMKSATSPRGILEWFVNFFTCGGVRRSNERWFREVIGKLTTSLLYVNKNAFFDGNKIFLEDVNGCTICLSCGAASENTDPMVIIEVNKNGKTVTDKVDSERFWNVCRMLKLMSKHNIQQPDSLITEDGFLNLRGVNLAHKDFQGEDLSKIDASNADFRETTLSNVNLVGANLCCANLHAVNLMGSNMTKANLTHADLTCANMSGVNLTAAILFGSDLTDTKLNGAKLDKIALTLAKALTGADLTGSQHTPTPLPDYNDRTLFPHPIF.

Pentapeptide repeat domains are found at residues 154–193 and 199–238; these read LNLRGVNLAHKDFQGEDLSKIDASNADFRETTLSNVNLVG and ANLHAVNLMGSNMTKANLTHADLTCANMSGVNLTAAILFG.

It localises to the secreted. The protein localises to the host membrane. Effector proteins function to alter host cell physiology and promote bacterial survival in host tissues. Does not appear to be required for the formation or the maintenance of either Salmonella-containing vacuole (SCV) or the Salmonella-induced filaments (Sifs). Not required for intracellular replication in phagocytic cells. This chain is Secreted effector protein PipB (pipB), found in Salmonella typhimurium (strain LT2 / SGSC1412 / ATCC 700720).